The chain runs to 1130 residues: MGANASNYPHSCSPRVGGNSQAQQTFIGTSSYSQQGYGCESKLYSLDHGHEKPQDKKKRTSGLATLKKKFIKRRKSNRSADHAKQMRELLSGWDVRDVNALVEEYEGTSALKELSLQASLARPEARTLQKDMADLYEDKYCTDVDLIFQETCFPVHRAILAARCPFFKTLLSSSPEYGAEIIMDISTAGIDMPMFSALLHYLYTGEFGMEDSRFQNVDILVQLSEEFGTPNPLDVDMRGLFDYMCYYDVVLSFSSDSELVEAFGGNQNCLDEELKAHKAIISARSPFFRNLLQRRIRTGEEITDRTLRTPTRIILDESIIPKKYAKVILHCMYTDVVDLSVLHCSPSVGSLSEVQALVAGKPNMTRAEEAMELYHIALFLEFNMLAQGCEDIIAESISLDTLIAVLKWSSHPYGSKWVHRQAVHFLCEELSQVMTSDVFYELSKDHLLTAIQSDYLQASEQDILKYLIKWGEHQLMKRIADREPNLLSGTAHSVNKRGVKRRDLDIEELREILSSLLPFVRIEHILPINSEVLSDAMKRGLISTPPSDMLPTAEGGKSNAWLRQKNAGIYVRPRLFSPYVEEAKSVLDEMMVEQTDLVRLRMVRMSNVPDTLYMVSNAMPQCCHMISHQQISSNQSSPPSVVANEIPVPRLLIMKDMVRRLQELRHTEQVQRAYALNCGEGATVSYEIQIRVLREFGLADAAAELLQNPHKFFPDERFGDESPLLTMRQPGRCRVNSTPTAETMFTDLDSFVAFHPPLPPPPPPYHPPATPIHNQLKAGWKQRPPSHHPSRSFSYPCNHSLFHCRTAPKPGPPPVYLPGVKVAPPDCTNTTGLGRQTVAAAAAAAAASAAIIPEKQVCPQPVLNDLMPDIAMGVSTLSLKDRRLPELAADTELCQTVSEAGTGPPQHLSCIPQRHTNTSRKKPTLEQKADGRENQQEYPDLYDFSNAACRPSTPAPGRHSPSPAHGRYFGPDLYSHNKASPNGLKSVYLPGQTSPKKQEDPRREYPPSPDGHPHRQKREPIRLDVVEQPPQRPDFPSAASENASHGPAHVRARTAVETDLTFGLTSNRPPSHSACSSEVLEERSSRRLTDSEPLGHGAHQRNADLERGDSISRGRRSPSKPDFLYKKSAL.

The span at 1–10 shows a compositional bias: polar residues; sequence MGANASNYPH. A disordered region spans residues 1–24; it reads MGANASNYPHSCSPRVGGNSQAQQ. Residue glycine 2 is the site of N-myristoyl glycine attachment. BTB domains are found at residues 142-211 and 247-341; these read TDVD…GMED and YDVV…DLSV. Positions 413–479 constitute a BACK domain; the sequence is YGSKWVHRQA…WGEHQLMKRI (67 aa). Residue serine 722 is modified to Phosphoserine. Disordered stretches follow at residues 898–1050 and 1062–1130; these read SEAG…PAHV and FGLT…KSAL. Basic and acidic residues-rich tracts occupy residues 923 to 935 and 996 to 1005; these read PTLE…RENQ and KKQEDPRREY. Phosphoserine is present on serine 1008. A compositionally biased stretch (polar residues) spans 1063–1075; it reads GLTSNRPPSHSAC. Composition is skewed to basic and acidic residues over residues 1080-1090 and 1101-1112; these read LEERSSRRLTD and RNADLERGDSIS.

As to expression, specifically expressed in embryonic epithelia.

Its subcellular location is the nucleus. In terms of biological role, acts as a mediator of epithelial dynamics and organ branching by promoting cleft progression. Induced following accumulation of fibronectin in forming clefts, leading to local expression of the cell-scattering SNAIL2 and suppression of E-cadherin levels, thereby altering cell morphology and reducing cell-cell adhesion. This stimulates cell separation at the base of forming clefts by local, dynamic intercellular gap formation and promotes cleft progression. In Mus musculus (Mouse), this protein is BTB/POZ domain-containing protein 7 (Btbd7).